The sequence spans 189 residues: MEEGGNLGGLIKMVHLLVLSGAWGMQMWVTFVSGFLLFRSLPRHTFGLVQSKLFPFYFHISMGCAFINLCILASQHAWAQLTFWEASQLYLLFLSLTLATVNARWLEPRTTAAMWALQTVEKERGLGGEVPGSHQGPDPYRQLREKDPKYSALRQNFFRYHGLSSLCNLGCVLSNGLCLAGLALEIRSL.

4 helical membrane-spanning segments follow: residues 18 to 38, 53 to 73, 81 to 101, and 166 to 186; these read VLSG…FLLF, LFPF…CILA, LTFW…LATV, and LCNL…ALEI.

This sequence belongs to the TMEM205 family. Widely expressed with highest levels in pancreas, followed by adrenal gland, thyroid, liver, mammary gland, prostate, kidney, and retina; lowest levels in skeletal muscle. Overexpressed in cisplatin-resistant cancer cells (at protein level).

It localises to the membrane. In cancer cells, plays a role in resistance to the chemotherapeutic agent cisplatin. In Homo sapiens (Human), this protein is Transmembrane protein 205 (TMEM205).